Reading from the N-terminus, the 382-residue chain is D-alanine--D-alanine ligase (382 aa).

In terms of domain architecture, ATP-grasp spans 161–372 (KVVFESAGLH…YAELIDELIH (212 aa)). Position 193–248 (193–248 (VDRLGFPVFVKPARAGSSMGISKVDSLEGLDAAIEEARRHDLKLVIEAGIVGREIE)) interacts with ATP. Residues Asp-326, Glu-339, and Asn-341 each coordinate Mg(2+).

This sequence belongs to the D-alanine--D-alanine ligase family. It depends on Mg(2+) as a cofactor. The cofactor is Mn(2+).

It is found in the cytoplasm. The enzyme catalyses 2 D-alanine + ATP = D-alanyl-D-alanine + ADP + phosphate + H(+). Its pathway is cell wall biogenesis; peptidoglycan biosynthesis. Cell wall formation. This is D-alanine--D-alanine ligase from Pseudarthrobacter chlorophenolicus (strain ATCC 700700 / DSM 12829 / CIP 107037 / JCM 12360 / KCTC 9906 / NCIMB 13794 / A6) (Arthrobacter chlorophenolicus).